A 205-amino-acid polypeptide reads, in one-letter code: Methylthioribulose-1-phosphate dehydratase (205 aa).

Zn(2+) is bound by residues H96 and H98.

This sequence belongs to the aldolase class II family. MtnB subfamily. Requires Zn(2+) as cofactor.

The enzyme catalyses 5-(methylsulfanyl)-D-ribulose 1-phosphate = 5-methylsulfanyl-2,3-dioxopentyl phosphate + H2O. It participates in amino-acid biosynthesis; L-methionine biosynthesis via salvage pathway; L-methionine from S-methyl-5-thio-alpha-D-ribose 1-phosphate: step 2/6. Functionally, catalyzes the dehydration of methylthioribulose-1-phosphate (MTRu-1-P) into 2,3-diketo-5-methylthiopentyl-1-phosphate (DK-MTP-1-P). This is Methylthioribulose-1-phosphate dehydratase from Pseudomonas aeruginosa (strain UCBPP-PA14).